Here is a 230-residue protein sequence, read N- to C-terminus: UPF0500 protein C1orf216 homolog (230 aa).

The tract at residues 1-103 is disordered; that stretch reads MFAAIQPGLA…AEPEKLSGAS (103 aa). A compositionally biased stretch (polar residues) spans 60–73; the sequence is RSSSESPSDNQVFQ. Over residues 85–94 the composition is skewed to low complexity; that stretch reads PPEGAEIPGA.

Belongs to the UPF0500 family.

The sequence is that of UPF0500 protein C1orf216 homolog from Mus musculus (Mouse).